Reading from the N-terminus, the 106-residue chain is UPF0060 membrane protein RL1530 (106 aa).

4 helical membrane-spanning segments follow: residues 4–24 (IIFA…WAWL), 30–50 (VWWL…LTLV), 58–78 (TFAA…WLVE), and 86–106 (DIGG…APRG).

This sequence belongs to the UPF0060 family.

The protein resides in the cell inner membrane. This chain is UPF0060 membrane protein RL1530, found in Rhizobium johnstonii (strain DSM 114642 / LMG 32736 / 3841) (Rhizobium leguminosarum bv. viciae).